A 195-amino-acid chain; its full sequence is Myelin-associated neurite-outgrowth inhibitor (195 aa).

The Cytoplasmic portion of the chain corresponds to 1-18; that stretch reads MNPVYSPGSSGVPYANAK. A helical transmembrane segment spans residues 19 to 43; that stretch reads GIGYPAGFPMGYAAAAPAYSPNMYA. Residues 44-143 lie on the Extracellular side of the membrane; sequence GPNPAFQPGY…APIPQPRGNG (100 aa). Residues 144–162 traverse the membrane as a helical segment; the sequence is VAMGMVAGTTMAMSAGTLL. Over 163–195 the chain is Cytoplasmic; that stretch reads TSHYPTPVAPHQVTMPTYRPPGTPTYSYVPPQW.

This sequence belongs to the FAM168 family.

It localises to the cytoplasm. The protein localises to the perinuclear region. It is found in the cell membrane. The protein resides in the cell projection. Its subcellular location is the axon. Inhibitor of neuronal axonal outgrowth. The protein is Myelin-associated neurite-outgrowth inhibitor (fam168b) of Xenopus tropicalis (Western clawed frog).